We begin with the raw amino-acid sequence, 159 residues long: RNA pyrophosphohydrolase (159 aa).

The region spanning 6 to 149 is the Nudix hydrolase domain; sequence GFRPNVGIIL…KREVYRRALK (144 aa). The short motif at 38–59 is the Nudix box element; it reads GGINDRETPEEALYRELNEEVG.

The protein belongs to the Nudix hydrolase family. RppH subfamily. It depends on a divalent metal cation as a cofactor.

Its function is as follows. Accelerates the degradation of transcripts by removing pyrophosphate from the 5'-end of triphosphorylated RNA, leading to a more labile monophosphorylated state that can stimulate subsequent ribonuclease cleavage. The chain is RNA pyrophosphohydrolase from Pseudomonas aeruginosa (strain LESB58).